The primary structure comprises 305 residues: Ribonucleoside-diphosphate reductase small subunit (305 aa).

3 residues coordinate Fe cation: glutamate 64, glutamate 94, and histidine 97. The active site involves tyrosine 101. The chain crosses the membrane as a helical span at residues 150–170 (ILLFLLVEGIFFISSFFSIGL). Fe cation contacts are provided by glutamate 157, glutamate 191, and histidine 194.

This sequence belongs to the ribonucleoside diphosphate reductase small chain family. As to quaternary structure, heterotetramer composed of a homodimer of the large subunit (R1) and a homodimer of the small subunit (R2). Larger multisubunit protein complex are also active, composed of (R1)n(R2)n. Requires Fe cation as cofactor.

The protein resides in the host membrane. The enzyme catalyses a 2'-deoxyribonucleoside 5'-diphosphate + [thioredoxin]-disulfide + H2O = a ribonucleoside 5'-diphosphate + [thioredoxin]-dithiol. Functionally, ribonucleoside-diphosphate reductase holoenzyme provides the precursors necessary for viral DNA synthesis. Allows virus growth in non-dividing cells, as well as reactivation from latency in infected hosts. Catalyzes the biosynthesis of deoxyribonucleotides from the corresponding ribonucleotides. The polypeptide is Ribonucleoside-diphosphate reductase small subunit (Saimiri sciureus (Common squirrel monkey)).